A 211-amino-acid chain; its full sequence is Putative ankyrin repeat protein R810 (211 aa).

ANK repeat units follow at residues threonine 31 to tyrosine 61, asparagine 72 to alanine 101, glutamine 103 to glycine 131, tyrosine 133 to glutamate 162, and methionine 163 to aspartate 191.

The polypeptide is Putative ankyrin repeat protein R810 (Acanthamoeba polyphaga mimivirus (APMV)).